The chain runs to 1460 residues: Nonribosomal peptide synthetase 6 (1460 aa).

The segment at 63–468 (EQAALHPEKI…GRQDQQVKLR (406 aa)) is adenylation. A Carrier 1 domain is found at 600-675 (EPTTEMEIKL…AMATKIKPLS (76 aa)). Ser636 bears the O-(pantetheine 4'-phosphoryl)serine mark. The interval 712–1135 (VQDVYPCTPL…AVLDPSEAQD (424 aa)) is condensation. Carrier domains follow at residues 1168–1241 (SPNE…GNEK) and 1236–1312 (SIGN…EETD). Residues Ser1202 and Ser1273 each carry the O-(pantetheine 4'-phosphoryl)serine modification. The segment at 1303–1324 (ELASSAEETDSPQTETNSNAPY) is disordered. The span at 1313-1322 (SPQTETNSNA) shows a compositional bias: polar residues.

The protein belongs to the NRP synthetase family.

It functions in the pathway siderophore biosynthesis. Functionally, NRPS involved in extracellular coprogen-type siderophores biosynthesis. The role of extracellular siderophores in fungal virulence to plants is to supply iron to the fungus during plant infection, but not to act as phytotoxins, depriving their hosts of iron. The polypeptide is Nonribosomal peptide synthetase 6 (Alternaria brassicicola (Dark leaf spot agent)).